The chain runs to 369 residues: Ubiquinone biosynthesis protein COQ4, mitochondrial (369 aa).

The N-terminal 28 residues, 1–28 (MTSILGSARPLIQVGPKSRNASTSMSRL), are a transit peptide targeting the mitochondrion. Residues 1 to 70 (MTSILGSARP…NPTNASRHPR (70 aa)) are disordered. Composition is skewed to polar residues over residues 19–33 (RNASTSMSRLPSFPT) and 47–66 (YATISPTAPRSSQRNPTNAS). Zn(2+) is bound by residues H198, D199, H202, and E214. The tract at residues 330–369 (FSGRAKKGGKRRGWPSKILEHQKAQHQQQQQQQKVDESRN) is disordered. Residues 332–343 (GRAKKGGKRRGW) show a composition bias toward basic residues.

Belongs to the COQ4 family. In terms of assembly, component of a multi-subunit COQ enzyme complex, composed of at least COQ3, COQ4, COQ5, COQ6, COQ7 and COQ9. Zn(2+) is required as a cofactor.

The protein resides in the mitochondrion inner membrane. It carries out the reaction a 4-hydroxy-3-methoxy-5-(all-trans-polyprenyl)benzoate + H(+) = a 2-methoxy-6-(all-trans-polyprenyl)phenol + CO2. The protein operates within cofactor biosynthesis; ubiquinone biosynthesis. In terms of biological role, lyase that catalyzes the C1-decarboxylation of 4-hydroxy-3-methoxy-5-(all-trans-polyprenyl)benzoic acid into 2-methoxy-6-(all-trans-polyprenyl)phenol during ubiquinone biosynthesis. This chain is Ubiquinone biosynthesis protein COQ4, mitochondrial, found in Mycosarcoma maydis (Corn smut fungus).